The primary structure comprises 99 residues: Integration host factor subunit alpha (99 aa).

It belongs to the bacterial histone-like protein family. In terms of assembly, heterodimer of an alpha and a beta chain.

This protein is one of the two subunits of integration host factor, a specific DNA-binding protein that functions in genetic recombination as well as in transcriptional and translational control. The chain is Integration host factor subunit alpha from Stenotrophomonas maltophilia (strain R551-3).